The sequence spans 147 residues: Large ribosomal subunit protein bL9 (147 aa).

The protein belongs to the bacterial ribosomal protein bL9 family.

In terms of biological role, binds to the 23S rRNA. The protein is Large ribosomal subunit protein bL9 of Clostridium tetani (strain Massachusetts / E88).